Consider the following 203-residue polypeptide: MPSKNGPLRVGIGGPVGSGKTALTEKLCKAMRERYSLAVVTNDIYTKEDAEALVRMQALPSERIVGVETGGCPHTAIREDASINLQAIADLNRRLPELDLVFIESGGDNLAATFSPDLADLTIYVISVCQGEEIPRKGGPGITKSDLLVINKKDLAPHVGADLEIMERDAARMRGEKPFVFSDMKRGDGVERIVDFLILHGGL.

14–21 (GPVGSGKT) contacts GTP.

The protein belongs to the SIMIBI class G3E GTPase family. UreG subfamily. Homodimer. UreD, UreF and UreG form a complex that acts as a GTP-hydrolysis-dependent molecular chaperone, activating the urease apoprotein by helping to assemble the nickel containing metallocenter of UreC. The UreE protein probably delivers the nickel.

The protein resides in the cytoplasm. In terms of biological role, facilitates the functional incorporation of the urease nickel metallocenter. This process requires GTP hydrolysis, probably effectuated by UreG. The polypeptide is Urease accessory protein UreG (Sinorhizobium medicae (strain WSM419) (Ensifer medicae)).